The sequence spans 180 residues: Large ribosomal subunit protein uL6 (180 aa).

This sequence belongs to the universal ribosomal protein uL6 family. Part of the 50S ribosomal subunit.

This protein binds to the 23S rRNA, and is important in its secondary structure. It is located near the subunit interface in the base of the L7/L12 stalk, and near the tRNA binding site of the peptidyltransferase center. The polypeptide is Large ribosomal subunit protein uL6 (Picosynechococcus sp. (strain ATCC 27264 / PCC 7002 / PR-6) (Agmenellum quadruplicatum)).